Reading from the N-terminus, the 180-residue chain is NADH-quinone oxidoreductase subunit I (180 aa).

4Fe-4S ferredoxin-type domains lie at 48–80 and 90–119; these read IVLT…LQKA and EFFR…LTPD. 8 residues coordinate [4Fe-4S] cluster: Cys-60, Cys-63, Cys-66, Cys-70, Cys-99, Cys-102, Cys-105, and Cys-109.

The protein belongs to the complex I 23 kDa subunit family. In terms of assembly, NDH-1 is composed of 13 different subunits. Subunits NuoA, H, J, K, L, M, N constitute the membrane sector of the complex. Requires [4Fe-4S] cluster as cofactor.

It localises to the cell inner membrane. It carries out the reaction a quinone + NADH + 5 H(+)(in) = a quinol + NAD(+) + 4 H(+)(out). NDH-1 shuttles electrons from NADH, via FMN and iron-sulfur (Fe-S) centers, to quinones in the respiratory chain. The immediate electron acceptor for the enzyme in this species is believed to be ubiquinone. Couples the redox reaction to proton translocation (for every two electrons transferred, four hydrogen ions are translocated across the cytoplasmic membrane), and thus conserves the redox energy in a proton gradient. This Erwinia tasmaniensis (strain DSM 17950 / CFBP 7177 / CIP 109463 / NCPPB 4357 / Et1/99) protein is NADH-quinone oxidoreductase subunit I.